Consider the following 260-residue polypeptide: 14-3-3 protein 3 (260 aa).

Belongs to the 14-3-3 family. Homodimer.

The polypeptide is 14-3-3 protein 3 (TFT3) (Solanum lycopersicum (Tomato)).